A 205-amino-acid polypeptide reads, in one-letter code: Auxin-responsive protein IAA8 (205 aa).

The interval M1–A48 is disordered. Polar residues predominate over residues T7 to S19. Residues P25–S39 show a composition bias toward low complexity. The short motif at L58 to L62 is the EAR-like (transcriptional repression) element. Positions D71–H98 are disordered. The segment covering N73–V87 has biased composition (polar residues). Positions S103 to D199 constitute a PB1 domain.

The protein belongs to the Aux/IAA family. In terms of assembly, homodimers and heterodimers. Highly expressed in green shoots. Expressed in flowers.

It is found in the nucleus. Its function is as follows. Aux/IAA proteins are short-lived transcriptional factors that function as repressors of early auxin response genes at low auxin concentrations. The sequence is that of Auxin-responsive protein IAA8 (IAA8) from Oryza sativa subsp. japonica (Rice).